Here is a 735-residue protein sequence, read N- to C-terminus: Stonin-1 (735 aa).

The segment at 1-35 is disordered; that stretch reads MCSTNPGKWVTFDDDPAVQSSQKSKNFPLENQGVC. One can recognise an SHD domain in the interval 275-408; that stretch reads GWSFMLRIPE…KLPAVSKPKK (134 aa). An MHD domain is found at 412-715; sequence EQEISLEIVD…ACYNIQVEIE (304 aa).

Belongs to the Stoned B family. Ubiquitous.

Its subcellular location is the cytoplasm. The protein localises to the membrane. In terms of biological role, may be involved in the endocytic machinery. The chain is Stonin-1 (STON1) from Homo sapiens (Human).